Here is a 302-residue protein sequence, read N- to C-terminus: Acetylglutamate kinase (302 aa).

Substrate is bound by residues 75–76 (GG), arginine 97, and asparagine 198.

Belongs to the acetylglutamate kinase family. ArgB subfamily.

It localises to the cytoplasm. It catalyses the reaction N-acetyl-L-glutamate + ATP = N-acetyl-L-glutamyl 5-phosphate + ADP. Its pathway is amino-acid biosynthesis; L-arginine biosynthesis; N(2)-acetyl-L-ornithine from L-glutamate: step 2/4. In terms of biological role, catalyzes the ATP-dependent phosphorylation of N-acetyl-L-glutamate. The sequence is that of Acetylglutamate kinase from Leifsonia xyli subsp. xyli (strain CTCB07).